The primary structure comprises 418 residues: Nuclear receptor coactivator 6 (418 aa).

Disordered stretches follow at residues 1 to 21 (EQIM…QNQS) and 77 to 98 (PPGP…ANND). The tract at residues 1–215 (EQIMTNQMQG…PPRKKKNCHQ (215 aa)) is TBP/GTF2A-binding region. Positions 1 to 352 (EQIMTNQMQG…LPVSQNVHPP (352 aa)) are CREBBP-binding region. Residues 1–418 (EQIMTNQMQG…YQESPQNSSS (418 aa)) are NCOA1-binding region. An NCOA6IP-binding region region spans residues 60–214 (VSNSPSQVMG…KPPRKKKNCH (155 aa)). Residues 84-98 (MAQQHTDPATTANND) show a composition bias toward polar residues. At Ser-171 the chain carries Phosphoserine. The LXXLL motif signature appears at 174–178 (LVNLL). The tract at residues 186–418 (HFGVNNKQNN…YQESPQNSSS (233 aa)) is disordered. The span at 190–199 (NNKQNNTNAN) shows a compositional bias: low complexity. The segment covering 200–212 (KQKKKKPPRKKKN) has biased composition (basic residues). The segment covering 269–279 (PLQQMPPQLMQ) has biased composition (low complexity). Over residues 282–310 (APPPQPPQQQPQPQLPQQQPQPQPPPPSQ) the composition is skewed to pro residues. Positions 311–336 (PQSQQQQQQQQQQQQQQMMMMLMMQQ) are enriched in low complexity. Residues Arg-342 and Arg-353 each carry the asymmetric dimethylarginine modification. The segment covering 358 to 370 (PDSQRVPMQQSGN) has biased composition (polar residues). Asymmetric dimethylarginine is present on Arg-391. Polar residues predominate over residues 399-418 (PLGSNSRKMVYQESPQNSSS).

In terms of assembly, monomer and homodimer. Interacts in vitro with the basal transcription factors GTF2A and TBP, suggesting an autonomous transactivation function. Interacts with NCOA1, CRSP3, RBM14, the histone acetyltransferase proteins EP300 and CREBBP, and with methyltransferase proteins NCOA6IP and PRMT2. Component of the MLL2/3 complex (also named ASCOM complex), at least composed of KMT2D/MLL2 or KMT2C/MLL3, ASH2L, RBBP5, WDR5, NCOA6, DPY30, KDM6A, PAXIP1/PTIP, PAGR1 and alpha- and beta-tubulin. Interacts with ZNF335; may enhance ligand-dependent transcriptional activation by nuclear hormone receptors. Phosphorylated.

It localises to the nucleus. Its function is as follows. Nuclear receptor coactivator that directly binds nuclear receptors and stimulates the transcriptional activities in a hormone-dependent fashion. Coactivate expression in an agonist- and AF2-dependent manner. May coactivate expression via a remodeling of chromatin and its interaction with histone acetyltransferase proteins. Involved in the coactivation of different nuclear receptors, such as for steroids (GR and ERs), retinoids (RARs and RXRs), thyroid hormone (TRs), vitamin D3 (VDR) and prostanoids (PPARs). Probably functions as a general coactivator, rather than just a nuclear receptor coactivator. May also be involved in the coactivation of the NF-kappa-B pathway. The protein is Nuclear receptor coactivator 6 (Ncoa6) of Rattus norvegicus (Rat).